The chain runs to 843 residues: Protein P (843 aa).

A terminal protein domain (TP) region spans residues 1-177 (MPLSYQHFRK…FCGSPYSWEQ (177 aa)). Residues 178–346 (ELQHGRLVFQ…YCLTHIVNLL (169 aa)) form a spacer region. 2 disordered regions span residues 224–273 (GLQP…SSTS) and 288–316 (HLST…RSQS). The segment covering 288 to 299 (HLSTSKRQSSSG) has biased composition (polar residues). A polymerase/reverse transcriptase domain (RT) region spans residues 347 to 690 (EDWGPCTEHG…YLNLYPVARQ (344 aa)). Residues 357–600 (EHNIRIPRTP…YSLNFMGYVI (244 aa)) enclose the Reverse transcriptase domain. 3 residues coordinate Mg(2+): Asp429, Asp551, and Asp552.

It belongs to the hepadnaviridae P protein family.

The enzyme catalyses DNA(n) + a 2'-deoxyribonucleoside 5'-triphosphate = DNA(n+1) + diphosphate. It carries out the reaction Endonucleolytic cleavage to 5'-phosphomonoester.. Its activity is regulated as follows. Activated by host HSP70 and HSP40 in vitro to be able to bind the epsilon loop of the pgRNA. Because deletion of the RNase H region renders the protein partly chaperone-independent, the chaperones may be needed indirectly to relieve occlusion of the RNA-binding site by this domain. Inhibited by several reverse-transcriptase inhibitors: Lamivudine, Adefovir and Entecavir. In terms of biological role, multifunctional enzyme that converts the viral RNA genome into dsDNA in viral cytoplasmic capsids. This enzyme displays a DNA polymerase activity that can copy either DNA or RNA templates, and a ribonuclease H (RNase H) activity that cleaves the RNA strand of RNA-DNA heteroduplexes in a partially processive 3'- to 5'-endonucleasic mode. Neo-synthesized pregenomic RNA (pgRNA) are encapsidated together with the P protein, and reverse-transcribed inside the nucleocapsid. Initiation of reverse-transcription occurs first by binding the epsilon loop on the pgRNA genome, and is initiated by protein priming, thereby the 5'-end of (-)DNA is covalently linked to P protein. Partial (+)DNA is synthesized from the (-)DNA template and generates the relaxed circular DNA (RC-DNA) genome. After budding and infection, the RC-DNA migrates in the nucleus, and is converted into a plasmid-like covalently closed circular DNA (cccDNA). The activity of P protein does not seem to be necessary for cccDNA generation, and is presumably released from (+)DNA by host nuclear DNA repair machinery. This is Protein P from Homo sapiens (Human).